The following is a 114-amino-acid chain: Amphinase-3 (114 aa).

The active-site Proton acceptor is the H15. The N-linked (GlcNAc...) asparagine glycan is linked to N25. Cystine bridges form between C26–C79, C41–C85, C59–C100, and C97–C114. Substrate is bound at residue 42-46 (KPINT). N-linked (GlcNAc...) asparagine glycosylation is found at N67 and N91. Catalysis depends on H107, which acts as the Proton donor.

It belongs to the pancreatic ribonuclease family. In terms of assembly, monomer. Post-translationally, there are at least five different forms arising from glycan heterogeneity.

The protein resides in the secreted. Functionally, endonuclease, hydrolyzes highly polymerized RNA, poly(U) and poly(C), and the dinucleotides CpA and UpA. More active towards rCA than rUA or rUG. Has cytotoxic activity against cultured human submaxillary gland carcinoma cells. This is Amphinase-3 from Lithobates pipiens (Northern leopard frog).